Consider the following 469-residue polypeptide: MFSLLLLLLLLCNTGSHGFPAATSETQEQDVEIVQKYLKNYYNLNSDGVPVEKKRNSGLVVEKLKQMQQFFGLKVTGKPDAETLNVMKQPRCGVPDVAEFVLTPGNPRWENTHLTYRIENYTPDLSREDVDRAIEKAFQLWSNVSPLTFTKVSEGQADIMISFVRGDHRDNSPFDGPGGNLAHAFQPGPGIGGDAHFDEDERWTKNFRDYNLYRVAAHELGHSLGLSHSTDIGALMYPNYIYTGDVQLSQDDIDGIQAIYGPSENPVQPSGPQTPQVCDSKLTFDAITTLRGELMFFKDRFYMRTNSFYPEVELNFISVFWPQVPNGLQAAYEIADRDEVRFFKGNKYWAVRGQDVLYGYPKDIHRSFGFPSTVKNIDAAVFEEDTGKTYFFVAHECWRYDEYKQSMDTGYPKMIAEEFPGIGNKVDAVFQKDGFLYFFHGTRQYQFDFKTKRILTLQKANSWFNCRKN.

An N-terminal signal peptide occupies residues 1-19; the sequence is MFSLLLLLLLLCNTGSHGF. Positions 20–99 are cleaved as a propeptide — activation peptide; it reads PAATSETQEQ…PRCGVPDVAE (80 aa). At serine 57 the chain carries Phosphoserine. The Cysteine switch signature appears at 90-97; the sequence is PRCGVPDV. Residue cysteine 92 participates in Zn(2+) binding. An N-linked (GlcNAc...) asparagine glycan is attached at asparagine 120. Ca(2+)-binding residues include aspartate 124 and aspartate 158. Zn(2+)-binding residues include histidine 168 and aspartate 170. Residues aspartate 175, glycine 176, glycine 178, and asparagine 180 each contribute to the Ca(2+) site. Histidine 183 contacts Zn(2+). Ca(2+)-binding residues include glycine 190, glycine 192, and aspartate 194. Histidine 196 is a Zn(2+) binding site. Residues aspartate 198, glutamate 199, and glutamate 201 each contribute to the Ca(2+) site. Histidine 218 contributes to the Zn(2+) binding site. Glutamate 219 is a catalytic residue. The Zn(2+) site is built by histidine 222 and histidine 228. Position 274 is a phosphothreonine (threonine 274). Hemopexin repeat units follow at residues 275–324, 325–371, 374–422, and 423–466; these read PQVC…WPQV, PNGL…FGFP, VKNI…FPGI, and GNKV…WFNC. The cysteines at positions 278 and 466 are disulfide-linked. 2 residues coordinate Ca(2+): aspartate 285 and glutamine 329. Residue tyrosine 360 is modified to Phosphotyrosine; by PKDCC. Positions 378 and 427 each coordinate Ca(2+).

The protein belongs to the peptidase M10A family. Requires Ca(2+) as cofactor. It depends on Zn(2+) as a cofactor. Undergoes autolytic cleavage to produce a N-terminal fragment having reduced collagenolytic activity. In terms of processing, tyrosine phosphorylated in platelets by PKDCC/VLK.

Its subcellular location is the secreted. It is found in the extracellular space. It localises to the extracellular matrix. It carries out the reaction Cleavage of the triple helix of collagen at about three-quarters of the length of the molecule from the N-terminus, at 775-Gly-|-Ile-776 in the alpha1(I) chain. Cleaves synthetic substrates and alpha-macroglobulins at bonds where P1' is a hydrophobic residue.. With respect to regulation, can be activated without removal of the activation peptide. Its function is as follows. Cleaves collagens of types I, II, and III at one site in the helical domain. Also cleaves collagens of types VII and X. This chain is Interstitial collagenase (MMP1), found in Sus scrofa (Pig).